The primary structure comprises 337 residues: Holliday junction branch migration complex subunit RuvB (337 aa).

The segment at 1–182 is large ATPase domain (RuvB-L); it reads MSEEKSVLRD…FGAVFRLSYY (182 aa). Residues leucine 21, arginine 22, glycine 63, lysine 66, threonine 67, threonine 68, 129 to 131, arginine 172, tyrosine 182, and arginine 219 contribute to the ATP site; that span reads EDY. Threonine 67 is a Mg(2+) binding site. Residues 183–253 form a small ATPAse domain (RuvB-S) region; the sequence is KLEEIKQIVR…ITQLALTKLG (71 aa). Positions 256–337 are head domain (RuvB-H); the sequence is HKGLDASDYL…VKYYKGLLDN (82 aa). Arginine 311 and arginine 316 together coordinate DNA.

This sequence belongs to the RuvB family. Homohexamer. Forms an RuvA(8)-RuvB(12)-Holliday junction (HJ) complex. HJ DNA is sandwiched between 2 RuvA tetramers; dsDNA enters through RuvA and exits via RuvB. An RuvB hexamer assembles on each DNA strand where it exits the tetramer. Each RuvB hexamer is contacted by two RuvA subunits (via domain III) on 2 adjacent RuvB subunits; this complex drives branch migration. In the full resolvosome a probable DNA-RuvA(4)-RuvB(12)-RuvC(2) complex forms which resolves the HJ.

It localises to the cytoplasm. The enzyme catalyses ATP + H2O = ADP + phosphate + H(+). In terms of biological role, the RuvA-RuvB-RuvC complex processes Holliday junction (HJ) DNA during genetic recombination and DNA repair, while the RuvA-RuvB complex plays an important role in the rescue of blocked DNA replication forks via replication fork reversal (RFR). RuvA specifically binds to HJ cruciform DNA, conferring on it an open structure. The RuvB hexamer acts as an ATP-dependent pump, pulling dsDNA into and through the RuvAB complex. RuvB forms 2 homohexamers on either side of HJ DNA bound by 1 or 2 RuvA tetramers; 4 subunits per hexamer contact DNA at a time. Coordinated motions by a converter formed by DNA-disengaged RuvB subunits stimulates ATP hydrolysis and nucleotide exchange. Immobilization of the converter enables RuvB to convert the ATP-contained energy into a lever motion, pulling 2 nucleotides of DNA out of the RuvA tetramer per ATP hydrolyzed, thus driving DNA branch migration. The RuvB motors rotate together with the DNA substrate, which together with the progressing nucleotide cycle form the mechanistic basis for DNA recombination by continuous HJ branch migration. Branch migration allows RuvC to scan DNA until it finds its consensus sequence, where it cleaves and resolves cruciform DNA. This Acholeplasma laidlawii (strain PG-8A) protein is Holliday junction branch migration complex subunit RuvB.